Here is an 867-residue protein sequence, read N- to C-terminus: Coiled-coil domain-containing protein 80 (867 aa).

A signal peptide spans 1–18 (MRARYMLGFGVLCLLTWA). 2 disordered regions span residues 83 to 121 (RKVL…SSAG) and 282 to 539 (DSQV…GTLA). Polar residues predominate over residues 95 to 104 (GTRNPIQQDD). The segment covering 288–297 (PTERRKEIRK) has biased composition (basic and acidic residues). The segment covering 301–370 (RPTTTTTPAP…PRTTRANTTP (70 aa)) has biased composition (low complexity). Residues 401-412 (ARYRDNHTSKKE) are compositionally biased toward basic and acidic residues. Basic residues predominate over residues 426–435 (KPTKVRPTKK). A compositionally biased stretch (basic and acidic residues) spans 436-451 (KNGDKDISNAYEEKYD). Over residues 471-483 (KRGKGKTDKKKKK) the composition is skewed to basic residues. Composition is skewed to basic and acidic residues over residues 484 to 504 (DKTD…DGKG) and 514 to 523 (KILEKEDYQK).

It belongs to the CCDC80 family. As to quaternary structure, binds to various extracellular matrix proteins.

Its subcellular location is the secreted. It is found in the extracellular space. It localises to the extracellular matrix. Its function is as follows. Promotes cell adhesion and matrix assembly. This Danio rerio (Zebrafish) protein is Coiled-coil domain-containing protein 80 (ccdc80).